We begin with the raw amino-acid sequence, 703 residues long: Ion-translocating oxidoreductase complex subunit C (703 aa).

2 4Fe-4S ferredoxin-type domains span residues 368–397 (MAPQ…QQLY) and 407–436 (KARN…VQYY). C377, C380, C383, C387, C416, C419, C422, and C426 together coordinate [4Fe-4S] cluster. Disordered stretches follow at residues 505-558 (AVPA…EDPR) and 653-674 (AQQA…EEDP). Residues 524-539 (AAREARKAQARERRAQ) show a composition bias toward basic and acidic residues.

The protein belongs to the 4Fe4S bacterial-type ferredoxin family. RnfC subfamily. As to quaternary structure, the complex is composed of six subunits: RnfA, RnfB, RnfC, RnfD, RnfE and RnfG. [4Fe-4S] cluster is required as a cofactor.

Its subcellular location is the cell inner membrane. Its function is as follows. Part of a membrane-bound complex that couples electron transfer with translocation of ions across the membrane. This Serratia proteamaculans (strain 568) protein is Ion-translocating oxidoreductase complex subunit C.